We begin with the raw amino-acid sequence, 265 residues long: Putative N(omega)-hydroxy-L-arginine synthase DcsA (265 aa).

This sequence belongs to the DcsA family. Heme serves as cofactor.

Involved in the biosynthesis of the antibiotic D-cycloserine (DCS), a cyclic structural analog of D-alanine, used as an antitubercular agent. Could catalyze the production of N(omega)-hydroxy-L-arginine (NHA) from L-arginine. The polypeptide is Putative N(omega)-hydroxy-L-arginine synthase DcsA (Streptomyces lavendulae).